The primary structure comprises 136 residues: Histone H3.2 (136 aa).

The interval 1–20 (MARTKQTARKSTGGKAPRKQ) is disordered. Position 5 is an N6-methylated lysine (Lys5). The residue at position 10 (Lys10) is an N6-acetyllysine; alternate. The residue at position 10 (Lys10) is an N6-methylated lysine; alternate. Ser11 is subject to Phosphoserine. Thr12 is subject to Phosphothreonine. N6-acetyllysine is present on Lys15. N6-acetyllysine; alternate is present on residues Lys19 and Lys24. An N6-methylated lysine; alternate mark is found at Lys19 and Lys24. The residue at position 37 (Lys37) is an N6-methylated lysine.

This sequence belongs to the histone H3 family. The nucleosome is a histone octamer containing two molecules each of H2A, H2B, H3 and H4 assembled in one H3-H4 heterotetramer and two H2A-H2B heterodimers. The octamer wraps approximately 147 bp of DNA. Post-translationally, acetylation is generally linked to gene activation. Can be acetylated to form H3K9ac, H3K14ac, H3K18ac and H3K23ac. H3K9ac could compete with H3K9me and prevent gene silencing. H3K9ac is restricted to euchromatin. Methylated to form mainly H3K4me, H3K9me, H3K18me, H3K23me and H3K36me. H3K4me1/2/3, H3K9me3 and H3K36me1/2/3 are typical marks for euchromatin, whereas heterochromatic chromocenters are enriched in H3K9me1/2. H2BK143ub1 is probably prerequisite for H3K4me. In terms of processing, can be phosphorylated to form H3S10ph and H3T11ph.

It is found in the nucleus. Its subcellular location is the chromosome. Functionally, core component of nucleosome. Nucleosomes wrap and compact DNA into chromatin, limiting DNA accessibility to the cellular machineries which require DNA as a template. Histones thereby play a central role in transcription regulation, DNA repair, DNA replication and chromosomal stability. DNA accessibility is regulated via a complex set of post-translational modifications of histones, also called histone code, and nucleosome remodeling. This Cichorium intybus (Chicory) protein is Histone H3.2.